The chain runs to 108 residues: Anthranilate 1,2-dioxygenase ferredoxin subunit (108 aa).

The 97-residue stretch at 9-105 (WHPLGAIDEF…IRIVDGQVEV (97 aa)) folds into the Rieske domain. Positions 49, 51, 68, and 71 each coordinate [2Fe-2S] cluster.

This sequence belongs to the bacterial ring-hydroxylating dioxygenase ferredoxin component family. As to quaternary structure, part of a multicomponent enzyme system composed of a reductase (AndAa), a ferredoxin (AndAb) and a two-subunit oxygenase component (AndAc and AndAd). It depends on [2Fe-2S] cluster as a cofactor.

Its pathway is aromatic compound metabolism; anthranilate degradation via hydroxylation; catechol from anthranilate: step 1/1. Part of the multicomponent anthranilate dioxygenase, that converts anthranilate to catechol. This protein seems to be a 2Fe-2S ferredoxin. This chain is Anthranilate 1,2-dioxygenase ferredoxin subunit, found in Burkholderia cepacia (Pseudomonas cepacia).